The following is a 416-amino-acid chain: Serine hydroxymethyltransferase (416 aa).

Residues Leu-118 and 122 to 124 contribute to the (6S)-5,6,7,8-tetrahydrofolate site; that span reads GHL. Residue Lys-227 is modified to N6-(pyridoxal phosphate)lysine. Residues Glu-242 and 350–352 contribute to the (6S)-5,6,7,8-tetrahydrofolate site; that span reads SPF.

Belongs to the SHMT family. As to quaternary structure, homodimer. The cofactor is pyridoxal 5'-phosphate.

It is found in the cytoplasm. It catalyses the reaction (6R)-5,10-methylene-5,6,7,8-tetrahydrofolate + glycine + H2O = (6S)-5,6,7,8-tetrahydrofolate + L-serine. Its pathway is one-carbon metabolism; tetrahydrofolate interconversion. It participates in amino-acid biosynthesis; glycine biosynthesis; glycine from L-serine: step 1/1. In terms of biological role, catalyzes the reversible interconversion of serine and glycine with tetrahydrofolate (THF) serving as the one-carbon carrier. This reaction serves as the major source of one-carbon groups required for the biosynthesis of purines, thymidylate, methionine, and other important biomolecules. Also exhibits THF-independent aldolase activity toward beta-hydroxyamino acids, producing glycine and aldehydes, via a retro-aldol mechanism. In Syntrophotalea carbinolica (strain DSM 2380 / NBRC 103641 / GraBd1) (Pelobacter carbinolicus), this protein is Serine hydroxymethyltransferase.